The chain runs to 215 residues: Small ribosomal subunit protein uS3 (215 aa).

In terms of domain architecture, KH type-2 spans 38–107 (IRDYIKKTYH…KFQLNIEEVK (70 aa)).

This sequence belongs to the universal ribosomal protein uS3 family. In terms of assembly, part of the 30S ribosomal subunit. Forms a tight complex with proteins S10 and S14.

Its function is as follows. Binds the lower part of the 30S subunit head. Binds mRNA in the 70S ribosome, positioning it for translation. This chain is Small ribosomal subunit protein uS3, found in Kosmotoga olearia (strain ATCC BAA-1733 / DSM 21960 / TBF 19.5.1).